The following is a 159-amino-acid chain: Cytochrome c-type biogenesis protein CcmE (159 aa).

Residues 1–8 (MNIRRKNR) are Cytoplasmic-facing. A helical; Signal-anchor for type II membrane protein transmembrane segment spans residues 9–29 (LWIACAVLAGLALTIGLVLYA). At 30–159 (LRSNIDLFYT…PASVYKDPAS (130 aa)) the chain is on the periplasmic side. Heme contacts are provided by His-130 and Tyr-134. Residues 134-147 (YTPPEVEKAMEANH) are compositionally biased toward basic and acidic residues. The tract at residues 134–159 (YTPPEVEKAMEANHRRPASVYKDPAS) is disordered.

The protein belongs to the CcmE/CycJ family.

Its subcellular location is the cell inner membrane. Its function is as follows. Heme chaperone required for the biogenesis of c-type cytochromes. Transiently binds heme delivered by CcmC and transfers the heme to apo-cytochromes in a process facilitated by CcmF and CcmH. The polypeptide is Cytochrome c-type biogenesis protein CcmE (Escherichia coli (strain SMS-3-5 / SECEC)).